A 372-amino-acid polypeptide reads, in one-letter code: Cytochrome b (372 aa).

A run of 4 helical transmembrane segments spans residues 25–45 (FGSM…FLAI), 69–90 (WIMQ…YIHI), 105–125 (WVSG…GYVL), and 170–190 (FFAL…IHVM). Heme b contacts are provided by histidine 75 and histidine 89. Residues histidine 174 and histidine 188 each coordinate heme b. A ubiquinone is bound at residue histidine 193. Transmembrane regions (helical) follow at residues 218-238 (YKDT…TSFF), 280-300 (LGGT…PFTH), 312-332 (MAQV…WAAT), and 339-358 (FTTI…IINP).

It belongs to the cytochrome b family. In terms of assembly, the cytochrome bc1 complex contains 3 respiratory subunits (MT-CYB, CYC1 and UQCRFS1), 2 core proteins (UQCRC1 and UQCRC2) and probably 6 low-molecular weight proteins. Heme b serves as cofactor.

It localises to the mitochondrion inner membrane. Component of the ubiquinol-cytochrome c reductase complex (complex III or cytochrome b-c1 complex) that is part of the mitochondrial respiratory chain. The b-c1 complex mediates electron transfer from ubiquinol to cytochrome c. Contributes to the generation of a proton gradient across the mitochondrial membrane that is then used for ATP synthesis. This Heterodon simus (Southern hognose snake) protein is Cytochrome b (MT-CYB).